A 205-amino-acid polypeptide reads, in one-letter code: Holliday junction branch migration complex subunit RuvA (205 aa).

Residues 1-68 (MIGYLEGTLL…QPKPVLIGFN (68 aa)) form a domain I region. Residues 69–146 (TEEEKDFFHL…RFADAGHSSA (78 aa)) are domain II. Residues 147-151 (PDVPV) are flexible linker. The domain III stretch occupies residues 152 to 205 (TGSLADQTVEVLVGQLGYKPNEARLMVAGALKRNPDVSTPEALFDEIFKHGQAQ).

Belongs to the RuvA family. Homotetramer. Forms an RuvA(8)-RuvB(12)-Holliday junction (HJ) complex. HJ DNA is sandwiched between 2 RuvA tetramers; dsDNA enters through RuvA and exits via RuvB. An RuvB hexamer assembles on each DNA strand where it exits the tetramer. Each RuvB hexamer is contacted by two RuvA subunits (via domain III) on 2 adjacent RuvB subunits; this complex drives branch migration. In the full resolvosome a probable DNA-RuvA(4)-RuvB(12)-RuvC(2) complex forms which resolves the HJ.

It localises to the cytoplasm. Its function is as follows. The RuvA-RuvB-RuvC complex processes Holliday junction (HJ) DNA during genetic recombination and DNA repair, while the RuvA-RuvB complex plays an important role in the rescue of blocked DNA replication forks via replication fork reversal (RFR). RuvA specifically binds to HJ cruciform DNA, conferring on it an open structure. The RuvB hexamer acts as an ATP-dependent pump, pulling dsDNA into and through the RuvAB complex. HJ branch migration allows RuvC to scan DNA until it finds its consensus sequence, where it cleaves and resolves the cruciform DNA. In Desulfosudis oleivorans (strain DSM 6200 / JCM 39069 / Hxd3) (Desulfococcus oleovorans), this protein is Holliday junction branch migration complex subunit RuvA.